A 722-amino-acid polypeptide reads, in one-letter code: Polyribonucleotide nucleotidyltransferase (722 aa).

The Mg(2+) site is built by aspartate 486 and aspartate 492. One can recognise a KH domain in the interval 553–612 (PRITTIQIRPEFIKNVIGPGGKVIKDIIARTGAAINIEDSGRVDIASANGEAVKAAIAMI). Residues 622 to 690 (GKIYTGTVRK…KTGKIRLSRK (69 aa)) form the S1 motif domain. The segment at 696-722 (RAAQQGAAAGEAAAQPAPAPTQPDAKA) is disordered.

It belongs to the polyribonucleotide nucleotidyltransferase family. Requires Mg(2+) as cofactor.

It localises to the cytoplasm. It catalyses the reaction RNA(n+1) + phosphate = RNA(n) + a ribonucleoside 5'-diphosphate. Involved in mRNA degradation. Catalyzes the phosphorolysis of single-stranded polyribonucleotides processively in the 3'- to 5'-direction. This is Polyribonucleotide nucleotidyltransferase from Myxococcus xanthus (strain DK1622).